Reading from the N-terminus, the 218-residue chain is uncharacterized protein (218 aa).

Disordered regions lie at residues 30–71 (FSHR…RSPP), 93–120 (SGRG…PRPD), and 133–209 (MEVE…PGFP). The segment covering 43 to 71 (PGAPAVVPAPVSAPRPASSPARSESRSPP) has biased composition (low complexity). Residues 94–110 (GRGGGGGGGGGARTGGG) show a composition bias toward gly residues. Over residues 138-148 (PPHPPPQPQVC) the composition is skewed to pro residues. The span at 156 to 171 (PGHGRAGLPEGKGPGG) shows a compositional bias: gly residues. Residues 191-209 (RAPSPAAPRRGRLPAPGFP) are compositionally biased toward low complexity.

This is an uncharacterized protein from Homo sapiens (Human).